Here is a 147-residue protein sequence, read N- to C-terminus: Acidic phospholipase A2 beta-bungarotoxin A4 chain (147 aa).

Residues methionine 1–alanine 19 form the signal peptide. Residues alanine 20–leucine 27 constitute a propeptide that is removed on maturation. 6 disulfides stabilise this stretch: cysteine 54-cysteine 146, cysteine 56-cysteine 72, cysteine 71-cysteine 127, cysteine 78-cysteine 120, cysteine 88-cysteine 113, and cysteine 106-cysteine 118. Ca(2+)-binding residues include tyrosine 55, glycine 57, and glycine 59. Histidine 75 is a catalytic residue. Aspartate 76 is a binding site for Ca(2+). Residue aspartate 121 is part of the active site.

It belongs to the phospholipase A2 family. Group I subfamily. D49 sub-subfamily. In terms of assembly, heterodimer; disulfide-linked. The A chains have phospholipase A2 activity and the B chains show homology with the basic protease inhibitors. Ca(2+) is required as a cofactor. Expressed by the venom gland.

The protein localises to the secreted. It carries out the reaction a 1,2-diacyl-sn-glycero-3-phosphocholine + H2O = a 1-acyl-sn-glycero-3-phosphocholine + a fatty acid + H(+). Its function is as follows. Snake venom phospholipase A2 (PLA2) that inhibits neuromuscular transmission by blocking acetylcholine release from the nerve termini. PLA2 catalyzes the calcium-dependent hydrolysis of the 2-acyl groups in 3-sn-phosphoglycerides. This Bungarus multicinctus (Many-banded krait) protein is Acidic phospholipase A2 beta-bungarotoxin A4 chain.